A 258-amino-acid chain; its full sequence is MEITEPRRLYQQLAADLKERIEQGVYLVGDKLPAERFIADEKNVSRTVVREAIIMLEVEGYVEVRKGSGIHVVSNQPRHQQAADNNMEFANYGPFELLQARQLIESNIAEFAATQVTKQDIMKLMAIQEQARGEQCFRDSEWDLQFHIQVALATQNSALAAIVEKMWTQRSHNPYWKKLHEHIDSRTVDNWCDDHDQILKALIRKDPHAAKLAMWQHLENTKIMLFNETSDDFEFNADRYLFAENPVVHLDTATSGSK.

Positions 7-75 (RRLYQQLAAD…KGSGIHVVSN (69 aa)) constitute an HTH gntR-type domain. Residues 35 to 54 (ERFIADEKNVSRTVVREAII) constitute a DNA-binding region (H-T-H motif).

Functionally, repressor for the exu regulon that encode genes involved in hexuronate utilization. It regulates the ExuT, UxaCA and UxuRAB operons. Binds D-tagaturonate and D-fructuronate as inducers. The protein is Exu regulon transcriptional regulator (exuR) of Escherichia coli O157:H7.